Here is a 356-residue protein sequence, read N- to C-terminus: Tyrosine recombinase XerS (356 aa).

One can recognise a Core-binding (CB) domain in the interval 16 to 121 (IMPWFVLDYY…ALSSLYKYLT (106 aa)). In terms of domain architecture, Tyr recombinase spans 169-354 (EFLDYVDCEY…VNDEQKNALD (186 aa)). Catalysis depends on residues arginine 210, lysine 234, histidine 306, arginine 309, and histidine 332. The active-site O-(3'-phospho-DNA)-tyrosine intermediate is the tyrosine 341.

It belongs to the 'phage' integrase family. XerS subfamily.

It localises to the cytoplasm. FtsK is required for recombination. Its function is as follows. Site-specific tyrosine recombinase, which acts by catalyzing the cutting and rejoining of the recombining DNA molecules. Essential to convert dimers of the bacterial chromosome into monomers to permit their segregation at cell division. This chain is Tyrosine recombinase XerS, found in Streptococcus uberis (strain ATCC BAA-854 / 0140J).